Consider the following 153-residue polypeptide: Putative nuclear shuttle protein (153 aa).

Belongs to the nanoviridae nuclear shuttle protein family.

It is found in the host nucleus. The protein localises to the host cytoplasm. Functionally, putative nuclear shuttle protein. This chain is Putative nuclear shuttle protein (DNA-N), found in Faba bean necrotic yellows virus (isolate Syrian SV292-88) (FBNYV).